A 126-amino-acid chain; its full sequence is Fluoride-specific ion channel FluC 2 (126 aa).

Helical transmembrane passes span 11–31 (IFLIGAGGFLGAICRFSLCEL), 43–63 (VLGSFMLGLIMYDTEYIGFIG), 69–89 (AFGTGFMGAFTTFSTFAVQSF), and 93–113 (FFPALENISVNLFLALVGVFM). Na(+) is bound by residues G76 and T79.

The protein belongs to the fluoride channel Fluc/FEX (TC 1.A.43) family.

It localises to the cell membrane. The catalysed reaction is fluoride(in) = fluoride(out). With respect to regulation, na(+) is not transported, but it plays an essential structural role and its presence is essential for fluoride channel function. Fluoride-specific ion channel. Important for reducing fluoride concentration in the cell, thus reducing its toxicity. In Methanosarcina barkeri (strain Fusaro / DSM 804), this protein is Fluoride-specific ion channel FluC 2.